We begin with the raw amino-acid sequence, 304 residues long: Bifunctional protein FolD (304 aa).

Residues 167-169 (GRS), S192, and I233 contribute to the NADP(+) site.

This sequence belongs to the tetrahydrofolate dehydrogenase/cyclohydrolase family. In terms of assembly, homodimer.

It carries out the reaction (6R)-5,10-methylene-5,6,7,8-tetrahydrofolate + NADP(+) = (6R)-5,10-methenyltetrahydrofolate + NADPH. It catalyses the reaction (6R)-5,10-methenyltetrahydrofolate + H2O = (6R)-10-formyltetrahydrofolate + H(+). It functions in the pathway one-carbon metabolism; tetrahydrofolate interconversion. Functionally, catalyzes the oxidation of 5,10-methylenetetrahydrofolate to 5,10-methenyltetrahydrofolate and then the hydrolysis of 5,10-methenyltetrahydrofolate to 10-formyltetrahydrofolate. The chain is Bifunctional protein FolD from Rhodospirillum centenum (strain ATCC 51521 / SW).